Here is a 402-residue protein sequence, read N- to C-terminus: Formate-dependent phosphoribosylglycinamide formyltransferase (402 aa).

N(1)-(5-phospho-beta-D-ribosyl)glycinamide-binding positions include 23 to 24 (EL) and Glu83. ATP-binding positions include Arg115, Lys156, 196–199 (EEFV), and Glu204. Residues 120 to 316 (RLAAEKVGVP…EFAIHARAVL (197 aa)) enclose the ATP-grasp domain. Glu274 and Glu287 together coordinate Mg(2+). N(1)-(5-phospho-beta-D-ribosyl)glycinamide contacts are provided by residues Asp294, Lys364, and 371–372 (RR).

This sequence belongs to the PurK/PurT family. In terms of assembly, homodimer.

The enzyme catalyses N(1)-(5-phospho-beta-D-ribosyl)glycinamide + formate + ATP = N(2)-formyl-N(1)-(5-phospho-beta-D-ribosyl)glycinamide + ADP + phosphate + H(+). The protein operates within purine metabolism; IMP biosynthesis via de novo pathway; N(2)-formyl-N(1)-(5-phospho-D-ribosyl)glycinamide from N(1)-(5-phospho-D-ribosyl)glycinamide (formate route): step 1/1. Its function is as follows. Involved in the de novo purine biosynthesis. Catalyzes the transfer of formate to 5-phospho-ribosyl-glycinamide (GAR), producing 5-phospho-ribosyl-N-formylglycinamide (FGAR). Formate is provided by PurU via hydrolysis of 10-formyl-tetrahydrofolate. The chain is Formate-dependent phosphoribosylglycinamide formyltransferase from Ignicoccus hospitalis (strain KIN4/I / DSM 18386 / JCM 14125).